A 296-amino-acid chain; its full sequence is MDVKTLVGEYYASLPSGVLREFVEDPSSREWAYTFLKGRDIVFTRKRRLDEVSGFLELYHSTGKFKNPKSWEGLLGWDLVIDVDAELPEEPEAFLKSLGRLLKDVVIACDELRRALGFPRPDVVNFSGSKGFHVRYFDSTVRRWLRWDLHERRGIKPGEIIQRVGRGVVWLAREGFVAGDRVRALREGLLDDSMYDLKRLIRCVGSMNVKSLLPAVPVWSREGGRWVDFRDEVLGMNDLELGCLVAHRTLTWPGRGGLGVVLSRVLDLDTDADPEDPSDFVEVWGNVMSVLGELKP.

Residues Asp-82, Asp-84, and Asp-191 contribute to the active site.

It belongs to the eukaryotic-type primase small subunit family. As to quaternary structure, heterodimer of a small subunit (PriS) and a large subunit (PriL). Requires Mg(2+) as cofactor. The cofactor is Mn(2+).

Functionally, catalytic subunit of DNA primase, an RNA polymerase that catalyzes the synthesis of short RNA molecules used as primers for DNA polymerase during DNA replication. The small subunit contains the primase catalytic core and has DNA synthesis activity on its own. Binding to the large subunit stabilizes and modulates the activity, increasing the rate of DNA synthesis while decreasing the length of the DNA fragments, and conferring RNA synthesis capability. The DNA polymerase activity may enable DNA primase to also catalyze primer extension after primer synthesis. May also play a role in DNA repair. The sequence is that of DNA primase small subunit PriS from Methanopyrus kandleri (strain AV19 / DSM 6324 / JCM 9639 / NBRC 100938).